The sequence spans 219 residues: Deoxyribose-phosphate aldolase (219 aa).

Aspartate 89 acts as the Proton donor/acceptor in catalysis. Lysine 151 (schiff-base intermediate with acetaldehyde) is an active-site residue. Lysine 180 (proton donor/acceptor) is an active-site residue.

The protein belongs to the DeoC/FbaB aldolase family. DeoC type 1 subfamily.

The protein resides in the cytoplasm. The catalysed reaction is 2-deoxy-D-ribose 5-phosphate = D-glyceraldehyde 3-phosphate + acetaldehyde. Its pathway is carbohydrate degradation; 2-deoxy-D-ribose 1-phosphate degradation; D-glyceraldehyde 3-phosphate and acetaldehyde from 2-deoxy-alpha-D-ribose 1-phosphate: step 2/2. Functionally, catalyzes a reversible aldol reaction between acetaldehyde and D-glyceraldehyde 3-phosphate to generate 2-deoxy-D-ribose 5-phosphate. This Clostridioides difficile (strain 630) (Peptoclostridium difficile) protein is Deoxyribose-phosphate aldolase.